A 278-amino-acid chain; its full sequence is Tryptophan synthase alpha chain (278 aa).

Residues E50 and D61 each act as proton acceptor in the active site.

It belongs to the TrpA family. Tetramer of two alpha and two beta chains.

It carries out the reaction (1S,2R)-1-C-(indol-3-yl)glycerol 3-phosphate + L-serine = D-glyceraldehyde 3-phosphate + L-tryptophan + H2O. The protein operates within amino-acid biosynthesis; L-tryptophan biosynthesis; L-tryptophan from chorismate: step 5/5. Its function is as follows. The alpha subunit is responsible for the aldol cleavage of indoleglycerol phosphate to indole and glyceraldehyde 3-phosphate. This chain is Tryptophan synthase alpha chain, found in Nitrobacter winogradskyi (strain ATCC 25391 / DSM 10237 / CIP 104748 / NCIMB 11846 / Nb-255).